The chain runs to 1558 residues: MTADKDKDKDKEKDRDRDRDRERDKRDKARESENARPRRSCTLEGGAKNYAESDHSEDEDNDNNSATTEESNKKSRKKPPKKKSRYERTDTGEITSYITEDDVVYRPGDCVYIESRRPNTPYFICSIQDFKLVHSSQACCRSPAPAFCDPPACSLPVAPQPPQHLSEAGRGPGGSKRDHLLMNVKWYYRQSEVPDSVYQHLVQDRHNENDSGRELVITDPVIKNRELFISDYVDTYHAAALRGKCNISHFSDIFAAREFKARVDSFFYILGYNPETRRLNSTQGEIRVGPSHQAKLPDLQPFPSPDGDTVTQHEELVWMPGVSDCDLLMYLRAARSMAAFAGMCDGGSTEDGCVAASRDDTTLNALNTLHESSYDAGKALQRLVKKPVPKLIEKCWTEDEVKRFVKGLRQYGKNFFRIRKELLPSKETGELITFYYYWKKTPEAASSRAHRRHRRQAVFRRIKTRTASTPVNTPSRPPSSEFLDLSSASEDDFDSEDSEQELKGYACRHCFTTTSKDWHHGGRENILLCTDCRIHFKKYGELPPIEKPVDPPPFMFKPVKEEDDGLSGKHSMRTRRSRGSMSTLRSGRKKQPTSPDGRASPINEDIRSSGRNSPSAASTSSNDSKAETVKKSAKKVKEEAASPLKSTKRQREKVASDTEDTDRITSKKTKTQEISRPNSPSEGEGESSDSRSVNDEGSSDPKDIDQDNRSTSPSIPSPQDNESDSDSSAQQQMLQAQPPALQAPSGAASAPSTAPPGTPQLPTQGPTPSATAVPPQGSPATSQPPNQTQSTVAPAAHTHIQQAPTLHPPRLPSPHPPLQPMTAPPSQSSAQPHPQPSLHSQGPPGPHSLQTGPLLQHPGPPQPFGLPSQPSQGQGPLGPSPAAAHPHSTIQLPASQSALQPQQPPREQPLPPAPLAMPHIKPPPTTPIPQLPAPQAHKHPPHLSGPSPFSLNANLPPPPALKPLSSLSTHHPPSAHPPPLQLMPQSQPLPSSPAQPPGLTQSQSLPPPAASHPTTGLHQVPSQSPFPQHPFVPGGPPPITPPSCPPTSTPPAGPSSSSQPPCSAAVSSGGSVPGAPSCPLPAVQIKEEALDEAEEPESPPPPPRSPSPEPTVVDTPSHASQSARFYKHLDRGYNSCARTDLYFMPLAGSKLAKKREEAIEKAKREAEQKAREEREREKEKEKEREREREREREAERAAKASSSAHEGRLSDPQLSGPGHMRPSFEPPPTTIAAVPPYIGPDTPALRTLSEYARPHVMSPTNRNHPFYMPLNPTDPLLAYHMPGLYNVDPTIRERELREREIREREIRERELRERMKPGFEVKPPELDPLHPATNPMEHFARHSALTIPPAAGPHPFASFHPGLNPLERERLALAGPQLRPEMSYPDRLAAERIHAERMASLTSDPLARLQMFNVTPHHHQHSHIHSHLHLHQQDPLHQGSAGPVHPLVDPLTAGPHLARFPYPPGTLPNPLLGQPPHEHEMLRHPVFGTPYPRDLPGAIPPPMSAAHQLQAMHAQSAELQRLAMEQQWLHGHPHMHGGHLPSQEDYYSRLKKEGDKQL.

Residues 1-36 (MTADKDKDKDKEKDRDRDRDRERDKRDKARESENAR) are compositionally biased toward basic and acidic residues. The interval 1-90 (MTADKDKDKD…KKKSRYERTD (90 aa)) is disordered. Phosphoserine is present on residues Ser53 and Ser56. Residues 74–85 (KSRKKPPKKKSR) are compositionally biased toward basic residues. The BAH domain maps to 103-283 (VVYRPGDCVY…PETRRLNSTQ (181 aa)). Phosphothreonine is present on Thr120. Ser142 and Ser304 each carry phosphoserine. An ELM2 domain is found at 284–387 (GEIRVGPSHQ…KALQRLVKKP (104 aa)). In terms of domain architecture, SANT spans 391-443 (LIEKCWTEDEVKRFVKGLRQYGKNFFRIRKELLPSKETGELITFYYYWKKTPE). A disordered region spans residues 464 to 495 (TRTASTPVNTPSRPPSSEFLDLSSASEDDFDS). The segment covering 465-474 (RTASTPVNTP) has biased composition (polar residues). Low complexity predominate over residues 479-488 (SSEFLDLSSA). The GATA-type zinc-finger motif lies at 507-532 (CRHCFTTTSKDWHHGGRENILLCTDC). Positions 542 to 1125 (LPPIEKPVDP…PSHASQSARF (584 aa)) are disordered. Lys560 participates in a covalent cross-link: Glycyl lysine isopeptide (Lys-Gly) (interchain with G-Cter in SUMO2). Thr593 bears the Phosphothreonine mark. Ser594, Ser600, and Ser613 each carry phosphoserine. Over residues 609 to 623 (SGRNSPSAASTSSND) the composition is skewed to low complexity. A compositionally biased stretch (basic and acidic residues) spans 624-640 (SKAETVKKSAKKVKEEA). Lys637 is covalently cross-linked (Glycyl lysine isopeptide (Lys-Gly) (interchain with G-Cter in SUMO2)). Phosphoserine is present on residues Ser642, Ser656, Ser675, and Ser679. The span at 652-673 (EKVASDTEDTDRITSKKTKTQE) shows a compositional bias: basic and acidic residues. The span at 688–708 (SDSRSVNDEGSSDPKDIDQDN) shows a compositional bias: basic and acidic residues. Over residues 709 to 720 (RSTSPSIPSPQD) the composition is skewed to polar residues. A compositionally biased stretch (low complexity) spans 726–752 (DSSAQQQMLQAQPPALQAPSGAASAPS). The span at 778-792 (SPATSQPPNQTQSTV) shows a compositional bias: polar residues. A compositionally biased stretch (pro residues) spans 806-823 (LHPPRLPSPHPPLQPMTA). Low complexity-rich tracts occupy residues 824–857 (PPSQSSAQPHPQPSLHSQGPPGPHSLQTGPLLQH), 865–874 (GLPSQPSQGQ), and 891–901 (QLPASQSALQP). The span at 902-932 (QQPPREQPLPPAPLAMPHIKPPPTTPIPQLP) shows a compositional bias: pro residues. Low complexity predominate over residues 962–972 (KPLSSLSTHHP). The segment covering 1012-1023 (HPTTGLHQVPSQ) has biased composition (polar residues). Over residues 1027 to 1053 (PQHPFVPGGPPPITPPSCPPTSTPPAG) the composition is skewed to pro residues. Over residues 1054-1077 (PSSSSQPPCSAAVSSGGSVPGAPS) the composition is skewed to low complexity. A phosphoserine mark is found at Ser1098, Ser1105, and Ser1107. Residues 1098–1109 (SPPPPPRSPSPE) are compositionally biased toward pro residues. The residue at position 1111 (Thr1111) is a Phosphothreonine. Residues 1148-1203 (GSKLAKKREEAIEKAKREAEQKAREEREREKEKEKEREREREREREAERAAKASSS) adopt a coiled-coil conformation. The residue at position 1150 (Lys1150) is an N6-acetyllysine. Positions 1154-1198 (KREEAIEKAKREAEQKAREEREREKEKEKEREREREREREAERAA) are enriched in basic and acidic residues. Positions 1154–1238 (KREEAIEKAK…TTIAAVPPYI (85 aa)) are disordered. Tyr1251 is subject to Phosphotyrosine. Position 1258 is a phosphoserine (Ser1258).

In terms of assembly, interacts with HDAC1 and ATN1. Interaction with ATN1 is improved when the poly-Gln region of ATN1 is extended. Interacts with FAT1.

The protein localises to the nucleus. It localises to the PML body. Plays a role as a transcriptional repressor during development. May play a role in the control of cell survival. This chain is Arginine-glutamic acid dipeptide repeats protein (Rere), found in Mus musculus (Mouse).